Reading from the N-terminus, the 278-residue chain is Envelope glycoprotein L (278 aa).

The first 30 residues, 1–30, serve as a signal peptide directing secretion; sequence MCRRPDCGFSFSPGPVILLWCCLLLPIVSS. The region spanning 43 to 256 is the gL betaherpesvirus-type domain; it reads VPAECPELTR…DKYYAGLPPE (214 aa). C154 and C159 are joined by a disulfide.

It belongs to the herpesviridae glycoprotein L (gL) family. Betaherpesvirinae gL subfamily. Interacts with glycoprotein H (gH); this interaction is necessary for the correct processing and cell surface expression of gH. Forms the envelope pentamer complex (PC) composed of gH, gL, UL128, UL130, and UL131A. The pentamer interacts with host NRP2. Forms the envelope trimer complex composed of gH, gL, and gO. The trimer interacts with host PDGFRA. The trimer also interacts with host EPHA2.

Its subcellular location is the virion membrane. The protein localises to the host cell membrane. It localises to the host Golgi apparatus. The protein resides in the host trans-Golgi network. Functionally, the heterodimer glycoprotein H-glycoprotein L is required for the fusion of viral and plasma membranes leading to virus entry into the host cell. Acts as a functional inhibitor of gH and maintains gH in an inhibited form. Upon binding to host integrins, gL dissociates from gH leading to activation of the viral fusion glycoproteins gB and gH. In human cytomegalovirus, forms two distincts complexes to mediate viral entry, a trimer and a pentamer at the surface of the virion envelope. The gH-gL-gO trimer is required for infection in fibroblasts by interacting with host PDGFRA, and in glioblastoma cells by interacting with host EPHA2. The gH-gL-UL128-UL130-UL131A pentamer is essential for viral entry in epithelial, endothelial and myeloid cells via interaction with host NRP2. The chain is Envelope glycoprotein L from Homo sapiens (Human).